Here is a 453-residue protein sequence, read N- to C-terminus: Lysine histidine transporter-like 1 (453 aa).

The Cytoplasmic portion of the chain corresponds to 1 to 44; the sequence is MYIQMTDGVPPPPEQSSLDHRIDELERQKEIDDWLPITSSRNAK. 2 consecutive transmembrane segments (helical) span residues 45–65 and 66–86; these read WWYS…LGLP and FFMA…SWII. Residues 87 to 122 lie on the Cytoplasmic side of the membrane; the sequence is TLYTLWQMVEMHEMVPGKRFDRYHELGQFAFGERLG. A helical membrane pass occupies residues 123–143; that stretch reads LYIIVPQQIIVEVGVCIVYMV. At 144–164 the chain is on the extracellular side; the sequence is TGGQSLKKFHEIACQDCSPIR. Residues 165–185 form a helical membrane-spanning segment; sequence LSFFIMIFASSHFVLSHLPNF. At 186–187 the chain is on the cytoplasmic side; sequence NS. Residues 188 to 208 traverse the membrane as a helical segment; the sequence is ISGVSLVAAVMSLSYSTIAWT. The Extracellular segment spans residues 209–231; sequence ATAAKGVQEDVQYGYKSGTTAST. The chain crosses the membrane as a helical span at residues 232–252; sequence VLSFFTGLGGIAFAYAGHNVV. At 253–276 the chain is on the cytoplasmic side; it reads LEIQATIPSTPSNPSKGPMWRGVV. Residues 277-297 form a helical membrane-spanning segment; that stretch reads VAYVVVALCYFPVALVGYGVF. Over 298 to 318 the chain is Extracellular; it reads GNAVLDNVLMSLETPVWAIAT. A helical transmembrane segment spans residues 319 to 339; it reads ANLFVVMHVIGSYQIFAMPVF. Topologically, residues 340 to 359 are cytoplasmic; the sequence is DMVETFLVKKLNFKPSTVLR. A helical membrane pass occupies residues 360–382; the sequence is FIVRNVYVALTMFIGIMIPFFGG. Residues 383–385 lie on the Extracellular side of the membrane; that stretch reads LLA. Residues 386-408 traverse the membrane as a helical segment; the sequence is FFGGFAFAPTSYFLPCIMWLLIY. The Cytoplasmic portion of the chain corresponds to 409–412; sequence KPKR. Residues 413–433 form a helical membrane-spanning segment; it reads FSLSWWTNWVCIVLGVVLMIL. Topologically, residues 434-453 are extracellular; sequence SSIGGLRQIIIQSKDYSFFS.

It belongs to the amino acid/polyamine transporter 2 family. Amino acid/auxin permease (AAAP) (TC 2.A.18.2) subfamily.

It is found in the cell membrane. Its function is as follows. Amino acid transporter. The sequence is that of Lysine histidine transporter-like 1 from Arabidopsis thaliana (Mouse-ear cress).